Here is a 218-residue protein sequence, read N- to C-terminus: dTTP/UTP pyrophosphatase (218 aa).

Aspartate 69 serves as the catalytic Proton acceptor.

This sequence belongs to the Maf family. YhdE subfamily. A divalent metal cation serves as cofactor.

Its subcellular location is the cytoplasm. It carries out the reaction dTTP + H2O = dTMP + diphosphate + H(+). It catalyses the reaction UTP + H2O = UMP + diphosphate + H(+). Its function is as follows. Nucleoside triphosphate pyrophosphatase that hydrolyzes dTTP and UTP. May have a dual role in cell division arrest and in preventing the incorporation of modified nucleotides into cellular nucleic acids. The polypeptide is dTTP/UTP pyrophosphatase (Thermomicrobium roseum (strain ATCC 27502 / DSM 5159 / P-2)).